We begin with the raw amino-acid sequence, 129 residues long: Insulin-like growth factor 2 (129 aa).

The first 24 residues, 1 to 24 (MGVPMGKSLLAPLTFLALASCCFA), serve as a signal peptide directing secretion. A b region spans residues 25 to 52 (AYRPSETLCGGELVDTLQFVCGDRGFYF). 3 cysteine pairs are disulfide-bonded: Cys33–Cys72, Cys45–Cys85, and Cys71–Cys76. Residues 53-65 (SRPASRVSRRSSR) are c. An a region spans residues 66–86 (GIVEECCFRSCDLALLETYCA). The tract at residues 87-92 (TPAKSE) is d. Positions 93 to 129 (RDVSTPPTVLPDNFPRYPVGKFFQYDTWKQSAQRLRR) are cleaved as a propeptide — e peptide.

The protein belongs to the insulin family. As to quaternary structure, interacts with MYORG; this interaction is required for IGF2 secretion. Interacts with integrins ITGAV:ITGB3 and ITGA6:ITGB4; integrin-binding is required for IGF2 signaling. Proteolytically processed by PCSK4, proIGF2 is cleaved at Arg-129 and Arg-92 to generate big-IGF2 and mature IGF2.

The protein localises to the secreted. In terms of biological role, the insulin-like growth factors possess growth-promoting activity. Major fetal growth hormone in mammals. Plays a key role in regulating fetoplacental development. IGF2 is influenced by placental lactogen. Also involved in tissue differentiation. In adults, involved in glucose metabolism in adipose tissue, skeletal muscle and liver. Acts as a ligand for integrin which is required for IGF2 signaling. Positively regulates myogenic transcription factor MYOD1 function by facilitating the recruitment of transcriptional coactivators, thereby controlling muscle terminal differentiation. Inhibits myoblast differentiation and modulates metabolism via increasing the mitochondrial respiration rate. Its function is as follows. Preptin undergoes glucose-mediated co-secretion with insulin, and acts as a physiological amplifier of glucose-mediated insulin secretion. Exhibits osteogenic properties by increasing osteoblast mitogenic activity through phosphoactivation of MAPK1 and MAPK3. The sequence is that of Insulin-like growth factor 2 from Neovison vison (American mink).